The sequence spans 294 residues: Ribosomal protein L11 methyltransferase (294 aa).

Thr147, Gly169, Asp191, and Asn231 together coordinate S-adenosyl-L-methionine.

The protein belongs to the methyltransferase superfamily. PrmA family.

It localises to the cytoplasm. It catalyses the reaction L-lysyl-[protein] + 3 S-adenosyl-L-methionine = N(6),N(6),N(6)-trimethyl-L-lysyl-[protein] + 3 S-adenosyl-L-homocysteine + 3 H(+). Methylates ribosomal protein L11. The chain is Ribosomal protein L11 methyltransferase from Dichelobacter nodosus (strain VCS1703A).